We begin with the raw amino-acid sequence, 375 residues long: Alanine racemase (375 aa).

Residue Lys35 is the Proton acceptor; specific for D-alanine of the active site. At Lys35 the chain carries N6-(pyridoxal phosphate)lysine. Position 133 (Arg133) interacts with substrate. Catalysis depends on Tyr261, which acts as the Proton acceptor; specific for L-alanine. Position 309 (Met309) interacts with substrate.

Belongs to the alanine racemase family. Pyridoxal 5'-phosphate serves as cofactor.

It catalyses the reaction L-alanine = D-alanine. The protein operates within amino-acid biosynthesis; D-alanine biosynthesis; D-alanine from L-alanine: step 1/1. Its function is as follows. Catalyzes the interconversion of L-alanine and D-alanine. May also act on other amino acids. The sequence is that of Alanine racemase (alr) from Syntrophobacter fumaroxidans (strain DSM 10017 / MPOB).